A 337-amino-acid polypeptide reads, in one-letter code: Alcohol dehydrogenase (337 aa).

Positions 38, 61, 92, 95, 98, 106, and 148 each coordinate Zn(2+). Residues 172 to 177 (GIGGLG), D195, K200, 260 to 262 (VGL), and R331 each bind NAD(+).

Belongs to the zinc-containing alcohol dehydrogenase family. Zn(2+) serves as cofactor.

It catalyses the reaction a primary alcohol + NAD(+) = an aldehyde + NADH + H(+). The enzyme catalyses a secondary alcohol + NAD(+) = a ketone + NADH + H(+). Its activity is regulated as follows. Substrate inhibition is not observed with any alcohols, and the enzyme-NADH dissociation is not considered to be a rate-limiting step. Functionally, NAD(+)-dependent alcohol dehydrogenase. This chain is Alcohol dehydrogenase (adhT), found in Geobacillus stearothermophilus (Bacillus stearothermophilus).